Reading from the N-terminus, the 259-residue chain is Thiazole synthase (259 aa).

The active-site Schiff-base intermediate with DXP is K99. Residues G161, 187–188, and 209–219 each bind 1-deoxy-D-xylulose 5-phosphate; these read AG and NSAIACAQNPI.

It belongs to the ThiG family. In terms of assembly, homotetramer. Forms heterodimers with either ThiH or ThiS.

It is found in the cytoplasm. It carries out the reaction [ThiS sulfur-carrier protein]-C-terminal-Gly-aminoethanethioate + 2-iminoacetate + 1-deoxy-D-xylulose 5-phosphate = [ThiS sulfur-carrier protein]-C-terminal Gly-Gly + 2-[(2R,5Z)-2-carboxy-4-methylthiazol-5(2H)-ylidene]ethyl phosphate + 2 H2O + H(+). It functions in the pathway cofactor biosynthesis; thiamine diphosphate biosynthesis. In terms of biological role, catalyzes the rearrangement of 1-deoxy-D-xylulose 5-phosphate (DXP) to produce the thiazole phosphate moiety of thiamine. Sulfur is provided by the thiocarboxylate moiety of the carrier protein ThiS. In vitro, sulfur can be provided by H(2)S. This Aliarcobacter butzleri (strain RM4018) (Arcobacter butzleri) protein is Thiazole synthase.